Reading from the N-terminus, the 725-residue chain is Beta-adducin (725 aa).

A disordered region spans residues 1–22 (MSEDTVPEAASPPPSQGQHYFD). Serine 11 and serine 25 each carry phosphoserine. Threonine 55 is modified (phosphothreonine). 2 positions are modified to phosphoserine: serine 60 and serine 344. Positions 425 to 444 (KQQKEKTRWLNTPNTYLRVN) are interaction with calmodulin. A disordered region spans residues 525-725 (AEKSRSPSTE…KSKKKEKVES (201 aa)). A phosphoserine mark is found at serine 530 and serine 532. Position 533 is a phosphothreonine (threonine 533). The residue at position 535 (serine 535) is a Phosphoserine. Position 561 is a phosphothreonine (threonine 561). Over residues 566–588 (EEYKKEVERKKLEQEQEGEKDAA) the composition is skewed to basic and acidic residues. 4 positions are modified to phosphoserine: serine 594, serine 598, serine 602, and serine 606. Residues 596 to 621 (VKSTPASPVQSPTRAGTKSPAVSPSK) are compositionally biased toward polar residues. Threonine 612 carries the phosphothreonine modification. A phosphoserine mark is found at serine 614, serine 618, and serine 620. Basic and acidic residues-rich tracts occupy residues 622–631 (ASEDAKKTEV) and 639–654 (EPEK…KEEE). Threonine 674 carries the post-translational modification Phosphothreonine. Residues serine 678, serine 685, serine 688, serine 692, serine 696, serine 698, serine 700, serine 702, and serine 712 each carry the phosphoserine modification. A compositionally biased stretch (low complexity) spans 687–700 (TSGPLSPEGSPSKS). A compositionally biased stretch (basic residues) spans 701–725 (PSKKKKKFRTPSFLKKSKKKEKVES). Residues 703-720 (KKKKKFRTPSFLKKSKKK) are interaction with calmodulin.

The protein belongs to the aldolase class II family. Adducin subfamily. Heterodimer of an alpha and a beta subunit. Found in a complex with ADD2, DMTN and SLC2A1. Interacts with SLC2A1. In terms of tissue distribution, found in liver, kidney, spleen, heart and brain.

The protein resides in the cytoplasm. Its subcellular location is the cytoskeleton. The protein localises to the cell membrane. Membrane-cytoskeleton-associated protein that promotes the assembly of the spectrin-actin network. Binds to the erythrocyte membrane receptor SLC2A1/GLUT1 and may therefore provide a link between the spectrin cytoskeleton to the plasma membrane. Binds to calmodulin. Calmodulin binds preferentially to the beta subunit. In Rattus norvegicus (Rat), this protein is Beta-adducin (Add2).